Here is a 935-residue protein sequence, read N- to C-terminus: Coatomer subunit gamma (935 aa).

HEAT repeat units lie at residues 258–296 (PQLFSQFRPLLSDWLSNKFESVQLETAKLITSFATRNSR), 337–372 (PEKIVVCNPELESLINDSNRNISTYAITTLLKTGTS), 373–410 (KNISSLISTITNFIHDVSDDFKIIIIDAVRTLSLNFPQ), 412–449 (WKSILNFLIDVLKNSEGGFKFKNSIVEALIDIVSFVPQ), and 524–562 (PTLYESIISLLKRIANDKDDEVRDRATIALEFIDSARNK). Residues 630–656 (KSETTLDTTPEAESVPEKRADANSFAG) are disordered. Thr638 carries the phosphothreonine modification. A Phosphoserine modification is found at Ser643. Lys647 is covalently cross-linked (Glycyl lysine isopeptide (Lys-Gly) (interchain with G-Cter in ubiquitin)). Phosphoserine is present on Ser653.

This sequence belongs to the COPG family. Oligomeric complex that consists of at least the alpha, beta, beta', gamma, delta, epsilon and zeta subunits. Interacts (via C-terminus) with GEA1 (via N-terminal region) and KEI1 (via C-terminal region).

The protein localises to the cytoplasm. It is found in the golgi apparatus membrane. Its subcellular location is the cytoplasmic vesicle. The protein resides in the COPI-coated vesicle membrane. It localises to the endosome. In terms of biological role, the coatomer is a cytosolic protein complex that binds to dilysine motifs and reversibly associates with Golgi non-clathrin-coated vesicles, which further mediate biosynthetic protein transport from the ER, via the Golgi up to the trans Golgi network. Coatomer complex is required for budding from Golgi membranes, and is essential for the retrograde Golgi-to-ER transport of dilysine-tagged proteins. The protein is Coatomer subunit gamma (SEC21) of Saccharomyces cerevisiae (strain ATCC 204508 / S288c) (Baker's yeast).